Here is a 185-residue protein sequence, read N- to C-terminus: Ribosome-recycling factor (185 aa).

The interval 137-166 (DGLKKAEKDGDIGQDESRGQSEKVQKMTDD) is disordered.

It belongs to the RRF family.

It localises to the cytoplasm. In terms of biological role, responsible for the release of ribosomes from messenger RNA at the termination of protein biosynthesis. May increase the efficiency of translation by recycling ribosomes from one round of translation to another. The protein is Ribosome-recycling factor of Agrobacterium fabrum (strain C58 / ATCC 33970) (Agrobacterium tumefaciens (strain C58)).